Consider the following 187-residue polypeptide: Acetyl-CoA decarbonylase/synthase complex subunit epsilon (187 aa).

Position 1 is a blocked amino end (Met) (Met1).

It belongs to the CdhB family. As to quaternary structure, heterotetramer of two alpha and two epsilon subunits. The ACDS complex is made up of alpha, epsilon, beta, gamma and delta subunits with a probable stoichiometry of (alpha(2)epsilon(2))(4)-beta(8)-(gamma(1)delta(1))(8).

Its function is as follows. Part of a complex that catalyzes the reversible cleavage of acetyl-CoA, allowing autotrophic growth from CO(2). The alpha-epsilon subcomponent functions as a carbon monoxide dehydrogenase. The precise role of the epsilon subunit is unclear; it may have a stabilizing role within the alpha(2)epsilon(2) component and/or be involved in electron transfer to FAD during a potential FAD-mediated CO oxidation. The sequence is that of Acetyl-CoA decarbonylase/synthase complex subunit epsilon from Methanothrix soehngenii (Methanosaeta concilii).